We begin with the raw amino-acid sequence, 146 residues long: Pseudoazurin (146 aa).

The N-terminal stretch at 1–23 (MRNIAIKFAAAGILAMLAAPALA) is a signal peptide. In terms of domain architecture, Plastocyanin-like spans 28–116 (VHMLNKGAEG…MGMIALIAVG (89 aa)). Positions 63, 101, 104, and 109 each coordinate Cu cation.

Requires Cu cation as cofactor.

The protein localises to the periplasm. This soluble electron transfer copper protein is required for the inactivation of copper-containing nitrite reductase in the presence of oxygen. Serves as a direct electron donor to the nitrite reductase. This Alcaligenes faecalis protein is Pseudoazurin.